Reading from the N-terminus, the 246-residue chain is DNA repair protein RecO (246 aa).

The protein belongs to the RecO family.

Involved in DNA repair and RecF pathway recombination. In Bifidobacterium adolescentis (strain ATCC 15703 / DSM 20083 / NCTC 11814 / E194a), this protein is DNA repair protein RecO.